An 870-amino-acid chain; its full sequence is Valine--tRNA ligase (870 aa).

Positions 42–52 match the 'HIGH' region motif; that stretch reads PNVTGVLHIGH. The 'KMSKS' region motif lies at 527–531; that stretch reads KMSKS. ATP is bound at residue Lys-530. Positions 800–870 form a coiled coil; sequence LENVDLSGIL…ISVELQNLRG (71 aa).

Belongs to the class-I aminoacyl-tRNA synthetase family. ValS type 1 subfamily. Monomer.

The protein localises to the cytoplasm. The enzyme catalyses tRNA(Val) + L-valine + ATP = L-valyl-tRNA(Val) + AMP + diphosphate. Its function is as follows. Catalyzes the attachment of valine to tRNA(Val). As ValRS can inadvertently accommodate and process structurally similar amino acids such as threonine, to avoid such errors, it has a 'posttransfer' editing activity that hydrolyzes mischarged Thr-tRNA(Val) in a tRNA-dependent manner. This chain is Valine--tRNA ligase, found in Campylobacter jejuni (strain RM1221).